We begin with the raw amino-acid sequence, 691 residues long: Pleckstrin homology domain-containing family G member 7 (691 aa).

Disordered stretches follow at residues 1–48 (MEKT…ISTS) and 109–140 (TSEP…LQPV). Residues 313–488 (MIFMNTLRYL…EGKVKWLDNF (176 aa)) form the DH domain. Asn-395 carries N-linked (GlcNAc...) asparagine glycosylation. In terms of domain architecture, PH spans 535 to 668 (HLLYEGKLTL…WMAQITTAIS (134 aa)).

This chain is Pleckstrin homology domain-containing family G member 7, found in Homo sapiens (Human).